Consider the following 436-residue polypeptide: Cytokine receptor-like factor 3 (436 aa).

Residues 9–87 are a coiled coil; that stretch reads LMQEAWESID…VSAIEQENIK (79 aa). The 94-residue stretch at 177-270 folds into the Fibronectin type-III domain; that stretch reads PPVQIEELIE…LQTSRTTLVP (94 aa).

Belongs to the cytokine receptor-like factor 3 family.

It is found in the cytoplasm. In terms of biological role, may play a role in the negative regulation of cell cycle progression. The protein is Cytokine receptor-like factor 3 (crlf3) of Xenopus laevis (African clawed frog).